The chain runs to 888 residues: Pyruvate dehydrogenase E1 component (888 aa).

In terms of assembly, homodimer. Part of the PDH complex, consisting of multiple copies of pyruvate dehydrogenase (E1), dihydrolipoamide acetyltransferase (E2) and lipoamide dehydrogenase (E3). The cofactor is thiamine diphosphate.

The catalysed reaction is N(6)-[(R)-lipoyl]-L-lysyl-[protein] + pyruvate + H(+) = N(6)-[(R)-S(8)-acetyldihydrolipoyl]-L-lysyl-[protein] + CO2. Its function is as follows. Component of the pyruvate dehydrogenase (PDH) complex, that catalyzes the overall conversion of pyruvate to acetyl-CoA and CO(2). This is Pyruvate dehydrogenase E1 component (aceE) from Buchnera aphidicola subsp. Schizaphis graminum (strain Sg).